The primary structure comprises 400 residues: DNA polymerase IV (400 aa).

Residues 8 to 191 (ILLCDANSFF…LPVRELFGIG (184 aa)) enclose the UmuC domain. Mg(2+) is bound by residues Asp12 and Asp109. Glu110 is a catalytic residue.

This sequence belongs to the DNA polymerase type-Y family. In terms of assembly, monomer. Requires Mg(2+) as cofactor.

The protein localises to the cytoplasm. The catalysed reaction is DNA(n) + a 2'-deoxyribonucleoside 5'-triphosphate = DNA(n+1) + diphosphate. Functionally, poorly processive, error-prone DNA polymerase involved in untargeted mutagenesis. Copies undamaged DNA at stalled replication forks, which arise in vivo from mismatched or misaligned primer ends. These misaligned primers can be extended by PolIV. Exhibits no 3'-5' exonuclease (proofreading) activity. May be involved in translesional synthesis, in conjunction with the beta clamp from PolIII. In Moorella thermoacetica (strain ATCC 39073 / JCM 9320), this protein is DNA polymerase IV.